The chain runs to 329 residues: Flotillin-like protein FloA (329 aa).

The next 2 helical transmembrane spans lie at 4–24 (FIPFIILIGVAFVILSIILSF) and 27–47 (VGLWITAQFSGVKVGIFTLVG).

It belongs to the flotillin-like FloA family. Homooligomerizes.

The protein resides in the cell membrane. Its subcellular location is the membrane raft. Functionally, found in functional membrane microdomains (FMM) that may be equivalent to eukaryotic membrane rafts. FMMs are highly dynamic and increase in number as cells age. Flotillins are thought to be important factors in membrane fluidity. The polypeptide is Flotillin-like protein FloA (Alkaliphilus metalliredigens (strain QYMF)).